The chain runs to 230 residues: Octanoyltransferase (230 aa).

Residues 31–230 (PETPDELWIC…GDKLTRYLAP (200 aa)) form the BPL/LPL catalytic domain. Residues 70-77 (RGGQVTYH), 163-165 (ALG), and 176-178 (GVA) each bind substrate. The active-site Acyl-thioester intermediate is the Cys-194.

The protein belongs to the LipB family.

It localises to the cytoplasm. The enzyme catalyses octanoyl-[ACP] + L-lysyl-[protein] = N(6)-octanoyl-L-lysyl-[protein] + holo-[ACP] + H(+). The protein operates within protein modification; protein lipoylation via endogenous pathway; protein N(6)-(lipoyl)lysine from octanoyl-[acyl-carrier-protein]: step 1/2. Functionally, catalyzes the transfer of endogenously produced octanoic acid from octanoyl-acyl-carrier-protein onto the lipoyl domains of lipoate-dependent enzymes. Lipoyl-ACP can also act as a substrate although octanoyl-ACP is likely to be the physiological substrate. The protein is Octanoyltransferase of Albidiferax ferrireducens (strain ATCC BAA-621 / DSM 15236 / T118) (Rhodoferax ferrireducens).